The primary structure comprises 404 residues: Corticosteroid-binding globulin (404 aa).

A signal peptide spans 1–30 (MAWSTRTMMSLALYTCFLWLLTSGLKTVQS). 2 N-linked (GlcNAc...) asparagine glycosylation sites follow: N95 and N225. Position 253 (Q253) interacts with cortisol. An N-linked (GlcNAc...) asparagine glycan is attached at N259. E285 contacts cortisol. Residue N326 is glycosylated (N-linked (GlcNAc...) asparagine). W392 contributes to the cortisol binding site.

This sequence belongs to the serpin family. Expressed by the liver; secreted in plasma.

The protein localises to the secreted. Its function is as follows. Major transport protein for glucocorticoids and progestins in the blood of almost all vertebrate species. The polypeptide is Corticosteroid-binding globulin (SERPINA6) (Mesocricetus auratus (Golden hamster)).